Here is a 206-residue protein sequence, read N- to C-terminus: GTP-binding protein YPTC5 (206 aa).

15–22 (GDSGVGKT) lines the GTP pocket. The short motif at 37 to 45 (YKATIGADF) is the Effector region element. GTP contacts are provided by residues 63–67 (DTAGQ) and 125–128 (NKID). Residues Cys205 and Cys206 are each lipidated (S-geranylgeranyl cysteine).

This sequence belongs to the small GTPase superfamily. Rab family.

The protein resides in the cell membrane. Functionally, protein transport. Probably involved in vesicular traffic. The protein is GTP-binding protein YPTC5 (YPTC5) of Chlamydomonas reinhardtii (Chlamydomonas smithii).